The primary structure comprises 391 residues: Transcription factor TCP3 (391 aa).

The tract at residues 1–34 is disordered; that stretch reads MAPDNDHFLDSPSPPLLEMRHHQSATENGGGCGE. A TCP domain is found at 49 to 107; sequence RKDRHSKVCTAKGPRDRRVRLSAPTAIQFYDVQDRLGFDRPSKAVDWLITKAKSAIDDL. Disordered stretches follow at residues 122-168, 317-345, and 363-391; these read HAAA…PASM, HHHH…PGIH, and FRIP…DSRH. Positions 381 to 391 are enriched in polar residues; it reads KPSSASSDSRH.

Interacts with SPL. Interacts with KIN10; KIN11 and FLZ3. Expressed in cotyledons, particularly in the vascular region, in leaves, roots, buds, flowers and immature siliques.

Its subcellular location is the nucleus. Plays a pivotal role in the control of morphogenesis of shoot organs by negatively regulating the expression of boundary-specific genes such as CUC genes, probably through the induction of miRNA (e.g. miR164). Participates in ovule development. This Arabidopsis thaliana (Mouse-ear cress) protein is Transcription factor TCP3 (TCP3).